The primary structure comprises 378 residues: MAFRTPAVQLHLKACVLLLLGGLLEAAYQERGTMYMWIDANQARILIGFEEDILIVSEGKMAPFTHDFRKAQQRMPAIPVNIHHVNFTWQATDQAEYFYEFQTLRSLDKDIMDDPTVNVPLLGSVPHKASVVQVGFPCRGDQDGVAAFEVTILVMDAGGNIILRTPHNAIFFKTCQRAKCPGGCRNGGYCNERQVCECQDGFYGVHCEKALCSPRCLNGGLCMSPGVCICPPGYFGSSCERANCSTTCLNGGTCFHPGKCICAVSFEGVRCELSKCRQPCRNGGKCTGRNKCKCSKGYHGDLCSKAVCEPSCGAHGTCVEPNRCQCREGWHGRHCNKRFRGGVSNSQRVSPSKHKSPSVAAAKEAPETSQPSETNYVV.

A signal peptide spans 1-28 (MAFRTPAVQLHLKACVLLLLGGLLEAAY). A WIF domain is found at 36-175 (MWIDANQARI…PHNAIFFKTC (140 aa)). N86 is a glycosylation site (N-linked (GlcNAc...) asparagine). Intrachain disulfides connect C138-C175, C180-C190, C184-C196, C212-C222, C216-C228, and C230-C239. 5 EGF-like domains span residues 176–205 (QRAK…FYGV), 208–240 (EKAL…SSCE), 243–272 (NCST…VRCE), 272–304 (ELSK…DLCS), and 305–336 (KAVC…RHCN). N-linked (GlcNAc...) asparagine glycosylation occurs at N243. Cystine bridges form between C244-C254, C248-C260, C262-C271, C276-C286, C280-C292, C294-C303, C308-C318, C312-C324, and C326-C335. The tract at residues 343–378 (VSNSQRVSPSKHKSPSVAAAKEAPETSQPSETNYVV) is disordered. A compositionally biased stretch (polar residues) spans 367 to 378 (ETSQPSETNYVV).

As to expression, highly expressed in unsegmented paraxial mesoderm.

The protein resides in the secreted. Its function is as follows. Binds to WNT proteins and inhibits their activities. May be involved in mesoderm segmentation. The protein is Wnt inhibitory factor 1 (wif1) of Danio rerio (Zebrafish).